The following is a 440-amino-acid chain: MNVVVLFSLVATHADIDLETVARLSAGSAAVSTSTVVLATCNRFEIYSAAENPATARAEMEAALAHATGFAPSLVSSSFKLLTGTDVAKHLFAVASGLDSAVVGEREIAGQVRRALIDAQTAFPVPGPLVRLFQTASRTAKDVGSQTALGSQGRSIVSVALDLAGDSSATAWDQRKAVVFGTGAYAGVTMALLRERGVSDLSVYSSSGRAADFVASRGGTAAESLEEALGSADLVIGCSGSDQRVSAETLADIRRRTGTAGEPLSVIDLALSRDFDPAITELPGVELLTLETVRLAAPSEQESALLQTQVIVSRAAADFELSIATRSVDTAIVALRKHTMAVLDAEMERVRAQHGCTAAAEEVEFALRRMVKQLLHGPTVRARELAAAGQQAEYIAALQSLYGIELESPTPAAQPVESIPAVEPASCPVNHNAVDRSQSA.

Residues 40 to 43 (TCNR), Ser100, 105 to 107 (ERE), and Gln111 each bind substrate. Residue Cys41 is the Nucleophile of the active site. Residue 181–186 (GTGAYA) coordinates NADP(+).

It belongs to the glutamyl-tRNA reductase family. In terms of assembly, homodimer.

It catalyses the reaction (S)-4-amino-5-oxopentanoate + tRNA(Glu) + NADP(+) = L-glutamyl-tRNA(Glu) + NADPH + H(+). The protein operates within porphyrin-containing compound metabolism; protoporphyrin-IX biosynthesis; 5-aminolevulinate from L-glutamyl-tRNA(Glu): step 1/2. In terms of biological role, catalyzes the NADPH-dependent reduction of glutamyl-tRNA(Glu) to glutamate 1-semialdehyde (GSA). This is Glutamyl-tRNA reductase from Renibacterium salmoninarum (strain ATCC 33209 / DSM 20767 / JCM 11484 / NBRC 15589 / NCIMB 2235).